Here is a 417-residue protein sequence, read N- to C-terminus: NADH-quinone oxidoreductase subunit D (417 aa).

It belongs to the complex I 49 kDa subunit family. NDH-1 is composed of 14 different subunits. Subunits NuoB, C, D, E, F, and G constitute the peripheral sector of the complex.

Its subcellular location is the cell inner membrane. It catalyses the reaction a quinone + NADH + 5 H(+)(in) = a quinol + NAD(+) + 4 H(+)(out). NDH-1 shuttles electrons from NADH, via FMN and iron-sulfur (Fe-S) centers, to quinones in the respiratory chain. The immediate electron acceptor for the enzyme in this species is believed to be ubiquinone. Couples the redox reaction to proton translocation (for every two electrons transferred, four hydrogen ions are translocated across the cytoplasmic membrane), and thus conserves the redox energy in a proton gradient. This chain is NADH-quinone oxidoreductase subunit D, found in Polaromonas sp. (strain JS666 / ATCC BAA-500).